A 673-amino-acid chain; its full sequence is Protein-arginine deiminase type-2 (673 aa).

An N-acetylmethionine modification is found at Met1. Ca(2+)-binding residues include Asp131, Asp133, Asp135, Glu139, Asn162, Asp164, Asp166, Asp174, Asp177, Lys179, Asp185, and Asp188. Citrulline is present on Arg352. Ca(2+) contacts are provided by Glu362, Asp397, Phe416, Leu419, and Glu420. The Nucleophile role is filled by Cys655.

The protein belongs to the protein arginine deiminase family. Homodimer. Requires Ca(2+) as cofactor. In terms of tissue distribution, expressed in various tissues including muscle, uterus, spinal cord, salivary gland and pancreas.

It is found in the cytoplasm. It catalyses the reaction L-arginyl-[protein] + H2O = L-citrullyl-[protein] + NH4(+). In terms of biological role, catalyzes the deimination of arginine residues of proteins. This chain is Protein-arginine deiminase type-2 (Padi2), found in Mus musculus (Mouse).